Reading from the N-terminus, the 208-residue chain is Octanoyltransferase (208 aa).

A BPL/LPL catalytic domain is found at 30 to 208 (GTASEAVFIL…ILKQEFYKIF (179 aa)). Substrate contacts are provided by residues 69–76 (RGGKFTYH), 142–144 (SIG), and 155–157 (GVA). Cys173 functions as the Acyl-thioester intermediate in the catalytic mechanism.

This sequence belongs to the LipB family.

It localises to the cytoplasm. The catalysed reaction is octanoyl-[ACP] + L-lysyl-[protein] = N(6)-octanoyl-L-lysyl-[protein] + holo-[ACP] + H(+). It functions in the pathway protein modification; protein lipoylation via endogenous pathway; protein N(6)-(lipoyl)lysine from octanoyl-[acyl-carrier-protein]: step 1/2. Functionally, catalyzes the transfer of endogenously produced octanoic acid from octanoyl-acyl-carrier-protein onto the lipoyl domains of lipoate-dependent enzymes. Lipoyl-ACP can also act as a substrate although octanoyl-ACP is likely to be the physiological substrate. This chain is Octanoyltransferase, found in Orientia tsutsugamushi (strain Ikeda) (Rickettsia tsutsugamushi).